The primary structure comprises 272 residues: Putative hydro-lyase Rpal_1947 (272 aa).

Belongs to the D-glutamate cyclase family.

This chain is Putative hydro-lyase Rpal_1947, found in Rhodopseudomonas palustris (strain TIE-1).